Reading from the N-terminus, the 364-residue chain is tRNA 2-selenouridine synthase (364 aa).

The 124-residue stretch at 14-137 (LIADTPIIDV…LRQTTIQATI (124 aa)) folds into the Rhodanese domain. Residue C97 is the S-selanylcysteine intermediate of the active site.

This sequence belongs to the SelU family. As to quaternary structure, monomer.

The enzyme catalyses 5-methylaminomethyl-2-thiouridine(34) in tRNA + selenophosphate + (2E)-geranyl diphosphate + H2O + H(+) = 5-methylaminomethyl-2-selenouridine(34) in tRNA + (2E)-thiogeraniol + phosphate + diphosphate. The catalysed reaction is 5-methylaminomethyl-2-thiouridine(34) in tRNA + (2E)-geranyl diphosphate = 5-methylaminomethyl-S-(2E)-geranyl-thiouridine(34) in tRNA + diphosphate. It catalyses the reaction 5-methylaminomethyl-S-(2E)-geranyl-thiouridine(34) in tRNA + selenophosphate + H(+) = 5-methylaminomethyl-2-(Se-phospho)selenouridine(34) in tRNA + (2E)-thiogeraniol. It carries out the reaction 5-methylaminomethyl-2-(Se-phospho)selenouridine(34) in tRNA + H2O = 5-methylaminomethyl-2-selenouridine(34) in tRNA + phosphate. Its function is as follows. Involved in the post-transcriptional modification of the uridine at the wobble position (U34) of tRNA(Lys), tRNA(Glu) and tRNA(Gln). Catalyzes the conversion of 2-thiouridine (S2U-RNA) to 2-selenouridine (Se2U-RNA). Acts in a two-step process involving geranylation of 2-thiouridine (S2U) to S-geranyl-2-thiouridine (geS2U) and subsequent selenation of the latter derivative to 2-selenouridine (Se2U) in the tRNA chain. This chain is tRNA 2-selenouridine synthase, found in Escherichia coli (strain 55989 / EAEC).